A 148-amino-acid polypeptide reads, in one-letter code: Ribose-5-P isomerase B (148 aa).

D-ribulose 5-phosphate is bound at residue 8–9 (DE). C65 (proton acceptor) is an active-site residue. D-ribulose 5-phosphate is bound by residues 66–70 (GTGIG), N99, R132, and K136.

Belongs to the LacAB/RpiB family.

The catalysed reaction is aldehydo-D-ribose 5-phosphate = D-ribulose 5-phosphate. It functions in the pathway carbohydrate degradation; pentose phosphate pathway; D-ribose 5-phosphate from D-ribulose 5-phosphate (non-oxidative stage): step 1/1. Functionally, catalyzes the interconversion of ribulose-5-P and ribose-5-P. In Listeria innocua serovar 6a (strain ATCC BAA-680 / CLIP 11262), this protein is Ribose-5-P isomerase B.